A 180-amino-acid polypeptide reads, in one-letter code: Putative methyltransferase YrhH (180 aa).

Belongs to the methyltransferase superfamily.

The protein is Putative methyltransferase YrhH (yrhH) of Bacillus subtilis (strain 168).